A 503-amino-acid chain; its full sequence is WAS/WASL-interacting protein family member 1 (503 aa).

A compositionally biased stretch (pro residues) spans 1–14 (MPVPPPPAPPPPPT). Residues 1–503 (MPVPPPPAPP…GAPPLPPIPR (503 aa)) form a disordered region. A compositionally biased stretch (polar residues) spans 21–31 (EKPTLNKTEQA). Residues 32–49 (GRNALLSDISKGKKLKKT) form the WH2 domain. Residue Arg33 is modified to Asymmetric dimethylarginine. The segment at 45–48 (KLKK) is binds actin. Positions 65-104 (AGAGGGGGGFGGGGGFGGGGGGGGGGSFGGGGPPGLGGLF) are enriched in gly residues. Positions 121-137 (SGGSRPPLLPPGGRSTS) are enriched in low complexity. Omega-N-methylarginine occurs at positions 125 and 134. Pro residues-rich tracts occupy residues 141 to 154 (FSPP…PVPS), 161 to 174 (PPEP…PPRP), 182 to 191 (SIPPPVPSTP), and 204 to 223 (PPVP…PPFP). At Ser142 the chain carries Phosphoserine. Ser234 bears the Phosphoserine mark. The span at 238–247 (SPLSSSSPFS) shows a compositional bias: low complexity. Pro residues-rich tracts occupy residues 282–298 (VPPP…PSTP) and 306–323 (APPP…PLPP). A Phosphoserine modification is found at Ser340. Position 345 is a phosphothreonine (Thr345). Residues 346 to 371 (PPLPSPGRSGPLPPPPSERPPPPVRD) are compositionally biased toward pro residues. Ser350 carries the post-translational modification Phosphoserine. XRSGPXPPXP motif repeat units follow at residues 352-361 (GRSGPLPPPP), 374-383 (GRSGPLPPPP), and 410-419 (PRSGPRPPLP). Positions 413 to 434 (GPRPPLPPDRPSAGAPPPPPPS) are enriched in pro residues. Residues 480-494 (ARNESRSGSNRRERG) are compositionally biased toward basic and acidic residues.

It belongs to the verprolin family. Binds to WAS, profilin and actin. Binds to WASL. Interacts with DBNL. Interacts with FNBP1L (via the SH3 domain). In terms of tissue distribution, highly expressed in peripheral blood mononuclear cells, spleen, placenta, small intestine, colon and thymus. Lower expression in ovary, heart, brain, lung, liver, skeletal muscle, kidney, pancreas, prostate and testis.

It is found in the cytoplasmic vesicle. Its subcellular location is the cytoplasm. The protein localises to the cytoskeleton. It localises to the cell projection. The protein resides in the ruffle. In terms of biological role, plays a role in the reorganization of the actin cytoskeleton. Contributes with NCK1 and GRB2 in the recruitment and activation of WASL. May participate in regulating the subcellular localization of WASL, resulting in the disassembly of stress fibers in favor of filopodia formation. Plays a role in the formation of cell ruffles. Plays an important role in the intracellular motility of vaccinia virus by functioning as an adapter for recruiting WASL to vaccinia virus. This chain is WAS/WASL-interacting protein family member 1 (WIPF1), found in Homo sapiens (Human).